We begin with the raw amino-acid sequence, 170 residues long: UPF0690 protein C1orf52 homolog (170 aa).

Disordered regions lie at residues 1–56 (MAAE…PDEL) and 124–170 (SNVY…KRKV). Residues 46-56 (DTKKLPGPDEL) show a composition bias toward basic and acidic residues. A compositionally biased stretch (acidic residues) spans 144 to 159 (EEEEAREDSPPSDDEQ).

The protein belongs to the UPF0690 family.

This Xenopus tropicalis (Western clawed frog) protein is UPF0690 protein C1orf52 homolog.